The following is a 241-amino-acid chain: VKSTNLMAFVATKMLERQEDLDTCTEMQVEKMKTSTKARLRTESSFAPRTWEDAIKDGELLFNGTILQAESPTMTPASVEMKGKKFPIDFAPSNIAPIGQNPIYLSPCIPNFDGNVWEATMYHHRGATLTKTMNCNCFQRTIWCHPNSSRMRLSYAFVLYCRNTKKICGYLIARQVAGIETGIRKCFRCIKSGFVMATDEISLTILQSIKSGAQLDPYWGNETPDIDKTEAYMLSLRETGP.

It is found in the host cytoplasm. Its subcellular location is the host nucleus. Its function is as follows. Suppresses the RNA silencing-based antiviral response in Drosophila cells. In Influenza C virus (strain C/Great lakes/1167/1954), this protein is Non-structural protein 1 (NS).